Reading from the N-terminus, the 234-residue chain is 2-amino-5-formylamino-6-ribosylaminopyrimidin-4(3H)-one 5'-monophosphate deformylase (234 aa).

Glutamate 30, histidine 32, aspartate 41, and histidine 111 together coordinate Fe cation.

Belongs to the creatininase superfamily. FAPy deformylase family. In terms of assembly, homodimer. It depends on Fe(2+) as a cofactor. Requires Zn(2+) as cofactor.

It catalyses the reaction 2-amino-5-formylamino-6-(5-phospho-D-ribosylamino)pyrimidin-4(3H)-one + H2O = 2,5-diamino-6-(1-D-ribosylamino)pyrimidin-4(3H)-one 5'-phosphate + formate + H(+). It participates in cofactor biosynthesis; coenzyme F420 biosynthesis. The protein operates within cofactor biosynthesis; riboflavin biosynthesis. Functionally, catalyzes the hydrolysis of the formamide of 2-amino-5-formylamino-6-ribosylamino-4(3H)-pyrimidinone 5'-monophosphate (FAPy) to form 2,5-diamino-6-ribosylamino-4(3H)-pyrimidinone 5'-phosphate (APy). The sequence is that of 2-amino-5-formylamino-6-ribosylaminopyrimidin-4(3H)-one 5'-monophosphate deformylase from Methanothermobacter thermautotrophicus (strain ATCC 29096 / DSM 1053 / JCM 10044 / NBRC 100330 / Delta H) (Methanobacterium thermoautotrophicum).